The sequence spans 79 residues: Dermaseptin-S8 (79 aa).

The first 22 residues, 1–22 (MDILKKSLFLVLFLGLVSLSIC), serve as a signal peptide directing secretion. Positions 23-45 (EEEKRENEDEEKQEDDEQSEMKR) are excised as a propeptide. Gln-76 carries the post-translational modification Glutamine amide. Positions 78 to 79 (AQ) are excised as a propeptide.

The protein belongs to the frog skin active peptide (FSAP) family. Dermaseptin subfamily. As to expression, expressed by the skin glands.

It localises to the secreted. Functionally, potent antimicrobial peptide with activity against bacteria, fungi and protozoa. Probably acts by disturbing membrane functions with its amphipathic structure. The sequence is that of Dermaseptin-S8 from Phyllomedusa sauvagei (Sauvage's leaf frog).